The sequence spans 195 residues: Protease (195 aa).

Positions 71–149 constitute a Peptidase A2 domain; the sequence is ALMLVDTGAE…DKWQILGRDV (79 aa). Asp76 is an active-site residue.

This is Protease from Bos taurus (Bovine).